A 179-amino-acid polypeptide reads, in one-letter code: Inner membrane-spanning protein YciB (179 aa).

The next 5 helical transmembrane spans lie at 22-42 (IYAA…YSWV), 50-70 (MALI…FFHN), 76-96 (WKVT…QWVM), 121-141 (LAWA…AFWL), and 149-169 (FKVF…GVYI).

It belongs to the YciB family.

Its subcellular location is the cell inner membrane. Functionally, plays a role in cell envelope biogenesis, maintenance of cell envelope integrity and membrane homeostasis. In Citrobacter koseri (strain ATCC BAA-895 / CDC 4225-83 / SGSC4696), this protein is Inner membrane-spanning protein YciB.